The chain runs to 22 residues: NADH-ubiquinone oxidoreductase 16 kDa subunit (22 aa).

In terms of assembly, complex I is composed of about 45 different subunits.

The protein resides in the mitochondrion inner membrane. The enzyme catalyses a ubiquinone + NADH + 5 H(+)(in) = a ubiquinol + NAD(+) + 4 H(+)(out). Transfer of electrons from NADH to the respiratory chain. The immediate electron acceptor for the enzyme is believed to be ubiquinone. This Solanum tuberosum (Potato) protein is NADH-ubiquinone oxidoreductase 16 kDa subunit.